The following is a 272-amino-acid chain: Tryptophan synthase alpha chain (272 aa).

Catalysis depends on proton acceptor residues Glu49 and Glu60.

It belongs to the TrpA family. As to quaternary structure, tetramer of two alpha and two beta chains.

The enzyme catalyses (1S,2R)-1-C-(indol-3-yl)glycerol 3-phosphate + L-serine = D-glyceraldehyde 3-phosphate + L-tryptophan + H2O. It participates in amino-acid biosynthesis; L-tryptophan biosynthesis; L-tryptophan from chorismate: step 5/5. The alpha subunit is responsible for the aldol cleavage of indoleglycerol phosphate to indole and glyceraldehyde 3-phosphate. In Legionella pneumophila subsp. pneumophila (strain Philadelphia 1 / ATCC 33152 / DSM 7513), this protein is Tryptophan synthase alpha chain.